Here is a 186-residue protein sequence, read N- to C-terminus: Ribosome-recycling factor (186 aa).

This sequence belongs to the RRF family.

The protein localises to the cytoplasm. In terms of biological role, responsible for the release of ribosomes from messenger RNA at the termination of protein biosynthesis. May increase the efficiency of translation by recycling ribosomes from one round of translation to another. The chain is Ribosome-recycling factor from Wolinella succinogenes (strain ATCC 29543 / DSM 1740 / CCUG 13145 / JCM 31913 / LMG 7466 / NCTC 11488 / FDC 602W) (Vibrio succinogenes).